Reading from the N-terminus, the 776-residue chain is E3 ubiquitin-protein ligase UHRF1 (776 aa).

The region spanning 1–78 (MWIQVRTMDG…VQLLVRQAVA (78 aa)) is the Ubiquitin-like domain. The segment at 88–126 (AELSDSDSGCGSAQSESDKGSTHGESDVQSAGASGQTDT) is disordered. The span at 93–102 (SDSGCGSAQS) shows a compositional bias: polar residues. Positions 103-113 (ESDKGSTHGES) are enriched in basic and acidic residues. Residues 114-126 (DVQSAGASGQTDT) show a composition bias toward polar residues. 2 tudor-like regions span residues 135–201 (GFYK…PRAR) and 208–277 (QLEP…IEEP). Residues 278-298 (GSAEGPGASSDSPLKKGSNGP) are disordered. The interval 290–299 (PLKKGSNGPE) is linker. A PHD-type zinc finger spans residues 297–364 (GPECKVCKDD…DWYCPDCRND (68 aa)). Histone H3R2me0 binding regions lie at residues 331 to 335 (CDECD) and 351 to 353 (PDD). The 164-residue stretch at 417 to 580 (GPVPGVPVGT…FLVWRYLLKR (164 aa)) folds into the YDG domain. The required to promote base flipping stretch occupies residues 443 to 444 (HV). Residues 461–462 (AG) and Asp-467 contribute to the DNA site. Required for formation of a 5-methylcytosine-binding pocket regions lie at residues 464–467 (YEDD) and 476–479 (YTGS). The disordered stretch occupies residues 617-660 (EKEKENKNEDDIEETPTKGKRKRKSQSMEEKSSPTKGTPKKMKV). A Phosphoserine; by CDK2 modification is found at Ser-649. The RING-type zinc finger occupies 706-745 (CICCQEVVYQPITTECQHNVCRECLQRSFKAKVYTCPACR).

Phosphorylation at Ser-649 is required for gastrulation. In terms of tissue distribution, expressed in proliferating tissues. Highly expressed 24-48 hours after fertilization (hpf) in rapidly proliferating tissues, including the tectum, retina and brachial arches. Preferentially expressed in the liver bud and expression is maintained in the fully developed liver. Also expressed in the proximal gut. In adult, the highest expression is detected in testis.

It localises to the nucleus. The protein localises to the cytoplasm. It catalyses the reaction S-ubiquitinyl-[E2 ubiquitin-conjugating enzyme]-L-cysteine + [acceptor protein]-L-lysine = [E2 ubiquitin-conjugating enzyme]-L-cysteine + N(6)-ubiquitinyl-[acceptor protein]-L-lysine.. Its pathway is protein modification; protein ubiquitination. Multidomain protein that acts as a key epigenetic regulator by bridging DNA methylation and chromatin modification. Specifically recognizes and binds hemimethylated DNA at replication forks via its YDG domain and recruits dnmt1 methyltransferase to ensure faithful propagation of the DNA methylation patterns through DNA replication. In addition to its role in maintenance of DNA methylation, also plays a key role in chromatin modification: through its tudor-like regions and PHD-type zinc fingers, specifically recognizes and binds histone H3 trimethylated at 'Lys-9' (H3K9me3) and unmethylated at 'Arg-2' (H3R2me0), respectively, and recruits chromatin proteins. Enriched in pericentric heterochromatin where it recruits different chromatin modifiers required for this chromatin replication. Also localizes to euchromatic regions where it negatively regulates transcription possibly by impacting DNA methylation and histone modifications. Has E3 ubiquitin-protein ligase activity by mediating the ubiquitination of target proteins. However, it is still unclear how E3 ubiquitin-protein ligase activity is related to its role in chromatin in vivo. Required for pregastrula and lens development. The chain is E3 ubiquitin-protein ligase UHRF1 (uhrf1) from Danio rerio (Zebrafish).